A 58-amino-acid chain; its full sequence is Keratin-associated protein 21-3 (58 aa).

Interacts with hair keratins.

In terms of biological role, in the hair cortex, hair keratin intermediate filaments are embedded in an interfilamentous matrix, consisting of hair keratin-associated proteins (KRTAP), which are essential for the formation of a rigid and resistant hair shaft through their extensive disulfide bond cross-linking with abundant cysteine residues of hair keratins. The matrix proteins include the high-sulfur and high-glycine-tyrosine keratins. In Homo sapiens (Human), this protein is Keratin-associated protein 21-3 (KRTAP21-3).